The following is a 246-amino-acid chain: Putative pectinesterase 57 (246 aa).

N-linked (GlcNAc...) asparagine glycans are attached at residues asparagine 127 and asparagine 143. Threonine 152 contacts substrate. Residue asparagine 174 is glycosylated (N-linked (GlcNAc...) asparagine). The active-site Proton donor is aspartate 205. Aspartate 226 serves as the catalytic Nucleophile.

Belongs to the pectinesterase family.

It carries out the reaction [(1-&gt;4)-alpha-D-galacturonosyl methyl ester](n) + n H2O = [(1-&gt;4)-alpha-D-galacturonosyl](n) + n methanol + n H(+). The protein operates within glycan metabolism; pectin degradation; 2-dehydro-3-deoxy-D-gluconate from pectin: step 1/5. Acts in the modification of cell walls via demethylesterification of cell wall pectin. This is Putative pectinesterase 57 (PME57) from Arabidopsis thaliana (Mouse-ear cress).